The chain runs to 360 residues: MLVYLAEYLTQFHTGFHVFSYVTFRAILGLLTALVFSLWCGPKLIRRLQLLQIGQVVRNDGPESHFSKRGTPTMGGLLILAGIFVSVLLWGDLESRYVLVMLFVLGSFGTIGFIDDYRKVVRKDTKGLIARWKYILQSLAALVVAVFLYSSSTLPGETQLVVPFFKDVMPQLGLVFIVLAYFTIVGASNAVNLTDGLDGLAIMPTVMVAGAFALIAYLSGHVQFANYLHIPHLPEAGELVIVCTAIVGAGLGFLWFNTYPAQVFMGDVGSLALGAALGAIAVLVRQEILLVIMGGVFVMETVSVILQVGSYKLRGQRIFRMAPIHHHYELKGWPEPRVIVRFWIISLFLVLLGLATLKLR.

Helical transmembrane passes span 18–38 (VFSY…VFSL), 73–93 (TMGG…WGDL), 97–117 (YVLV…IDDY), 134–154 (YILQ…SSTL), 168–188 (VMPQ…VGAS), 199–219 (GLAI…AYLS), 236–256 (AGEL…FLWF), 263–283 (VFMG…IAVL), 288–308 (ILLV…ILQV), and 338–358 (VIVR…ATLK).

It belongs to the glycosyltransferase 4 family. MraY subfamily. Mg(2+) serves as cofactor.

It localises to the cell inner membrane. The enzyme catalyses UDP-N-acetyl-alpha-D-muramoyl-L-alanyl-gamma-D-glutamyl-meso-2,6-diaminopimeloyl-D-alanyl-D-alanine + di-trans,octa-cis-undecaprenyl phosphate = di-trans,octa-cis-undecaprenyl diphospho-N-acetyl-alpha-D-muramoyl-L-alanyl-D-glutamyl-meso-2,6-diaminopimeloyl-D-alanyl-D-alanine + UMP. It participates in cell wall biogenesis; peptidoglycan biosynthesis. Functionally, catalyzes the initial step of the lipid cycle reactions in the biosynthesis of the cell wall peptidoglycan: transfers peptidoglycan precursor phospho-MurNAc-pentapeptide from UDP-MurNAc-pentapeptide onto the lipid carrier undecaprenyl phosphate, yielding undecaprenyl-pyrophosphoryl-MurNAc-pentapeptide, known as lipid I. The polypeptide is Phospho-N-acetylmuramoyl-pentapeptide-transferase (Shewanella denitrificans (strain OS217 / ATCC BAA-1090 / DSM 15013)).